The chain runs to 252 residues: Gamma carbonic anhydrase-like 1, mitochondrial (252 aa).

A mitochondrion-targeting transit peptide spans 1–29 (MATSIARLSRRGVTSNLIRRCFAAEAALA). Residues 99–101 (RGD) and 114–115 (QE) each bind substrate. Zn(2+) is bound at residue His120. The substrate site is built by Arg148, Gln160, and Tyr227.

Belongs to the gamma-class carbonic anhydrase family. In terms of assembly, component of the mitochondrial oxidoreductase respiratory chain complex I; element of the extra matrix-exposed domain, which is attached to the membrane arm of this complex. Interacts with GAMMACA2.

It is found in the mitochondrion membrane. Functionally, involved in complex I assembly in mitochondria and respiration. The sequence is that of Gamma carbonic anhydrase-like 1, mitochondrial (GAMMACAL1) from Arabidopsis thaliana (Mouse-ear cress).